The primary structure comprises 861 residues: MQEQYRPDMIEPKVQQYWVENKVFKAIKDESKEKYYCLSMFPYPSGRLHMGHVRNYTIGDVISRYQRMLGKNVLQPFGWDAFGLPAEGAAIKNKTAPAKWTYENIAYMKKQLQLLGFGFDWDREIATCKPEYYKWEQWFFTELYKKGLVYKKTSTVNWCPNDETVLANEQVHEGCCWRCDTPVEQKEIPQWFIKITDYAEQLLGGLDTLPQWPDMVKTMQRNWIGRSEGVEITFDVANTNEKVAVYTTRPDTFYGVSYLGIAAAHPLASLAAQNNPELAAFIQEAKNAKVAEADLATMEKKGMATGLFAIHPLTGEKLPIWVANFVLMHYGTGAVMAVPAHDQRDFEFAQKYSLPIKQVIAPLADEEIDLTKQAFVEHGKLVNSAEFDGKDFDGAFNGIADKLEKLGVGKRQVNYRLRDWGVSRQRYWGAPIPMLTLENGDVVPAPMEDLPIILPEDVVMDGVKSPIKADPNWAKTTLNGTPALKETDTFDTFMESSWYYARYTCPQYQNGMLDAEEANYWLPVDQYIGGIEHATMHLLYFRFFHKLLRDAGFVTSEEPADKLLCQGMVLADAFYYTSPTNERIWVSPTQVTLERDEKGRIIKATDPEGRELVHSGMTKMSKSKNNGIDPQEMVEKYGADTVRLFMMFASPAEMTLEWQESGVEGAKRFLGRVWNLVYQYQQNPAKTSLDITALSAEQKVLRREVHKTIAKVSDDIGRRQTFNTAIAAVMELMNKLTKAPLDSEQDRAVMAEALSAVVRMLYPITPHICFELWQALGNESAIDTAEWVKADEAAMVEDEKLIVVQVNGKVRGKVTVAADADEDTVKTIAFADENVKKFIDNQHIVKVIYVVGKLLNVVVKP.

The 'HIGH' region signature appears at 42-52; the sequence is PYPSGRLHMGH. A 'KMSKS' region motif is present at residues 619 to 623; sequence KMSKS. Position 622 (K622) interacts with ATP.

The protein belongs to the class-I aminoacyl-tRNA synthetase family.

It localises to the cytoplasm. It carries out the reaction tRNA(Leu) + L-leucine + ATP = L-leucyl-tRNA(Leu) + AMP + diphosphate. This is Leucine--tRNA ligase from Haemophilus influenzae (strain PittGG).